We begin with the raw amino-acid sequence, 272 residues long: MICOS complex subunit MIC27 (272 aa).

The transit peptide at 1-24 (MAAKVARLAAAASSLPFVCAVYAE) directs the protein to the mitochondrion. The Mitochondrial intermembrane segment spans residues 28–107 (SKSQLVKPKQ…YVYLKNPPPD (80 aa)). A helical transmembrane segment spans residues 108 to 126 (FLPRVGIITISGLAGVVLA). Over 127-134 (RKDSRFKK) the chain is Mitochondrial matrix. Residues 135-152 (IAYPLGLTTLGISVCYPA) form a helical membrane-spanning segment. Residues 153–272 (QAVVIAKITG…EDVDMYSTRS (120 aa)) lie on the Mitochondrial intermembrane side of the membrane. The tract at residues 187–272 (SKLQQESKSV…EDVDMYSTRS (86 aa)) is disordered. Polar residues-rich tracts occupy residues 188–198 (KLQQESKSVTQ) and 206–245 (ISNV…TVKT).

The protein belongs to the apolipoprotein O/MICOS complex subunit Mic27 family. In terms of assembly, component of the mitochondrial contact site and cristae organizing system (MICOS) complex (also known as MINOS or MitOS complex).

Its subcellular location is the mitochondrion inner membrane. In terms of biological role, component of the MICOS complex, a large protein complex of the mitochondrial inner membrane that plays crucial roles in the maintenance of crista junctions, inner membrane architecture, and formation of contact sites to the outer membrane. The chain is MICOS complex subunit MIC27 (APOOL) from Gallus gallus (Chicken).